A 502-amino-acid polypeptide reads, in one-letter code: Cytochrome P450 monooxygenase verC (502 aa).

The chain crosses the membrane as a helical span at residues 9 to 29 (IAALPMVSLLGAALIVVSVLG). Residues N124, N190, N271, and N342 are each glycosylated (N-linked (GlcNAc...) asparagine). C444 is a heme binding site.

This sequence belongs to the cytochrome P450 family. Heme serves as cofactor.

The protein resides in the membrane. It functions in the pathway mycotoxin biosynthesis. Cytochrome P450 monooxygenase; part of the gene cluster that mediates the biosynthesis of 11'-deoxyverticillin A, one of the dimeric epipolythiodioxopiperazines (ETPs) from the verticillin family that act as mycotoxins. 11'-deoxyverticillin A is required for normal conidiation. The nonribosomal peptide synthetase verP is speculated to be responsible for condensation of amino acids to form the carbon skeleton of verticillin, whereas the cluster-specific tailoring enzymes are involved in further modifications leading to the production of 11'-deoxyverticillin A. In Clonostachys rogersoniana, this protein is Cytochrome P450 monooxygenase verC.